Reading from the N-terminus, the 278-residue chain is Large ribosomal subunit protein uL2c (278 aa).

The disordered stretch occupies residues 224–267 (VVMNPVDHPHGGGEGRAPIGRKKPLTPWGHTALGGRSRKNHKYS).

The protein belongs to the universal ribosomal protein uL2 family. As to quaternary structure, part of the 50S ribosomal subunit.

It is found in the plastid. The protein localises to the chloroplast. This Huperzia lucidula (Shining clubmoss) protein is Large ribosomal subunit protein uL2c (rpl2).